The chain runs to 148 residues: Lysozyme C (148 aa).

The first 18 residues, 1–18, serve as a signal peptide directing secretion; that stretch reads MKALTILGLVLLSVTVQG. Residues 19-148 enclose the C-type lysozyme domain; sequence KIFERCELAR…VSQYVKGCGV (130 aa). 4 disulfides stabilise this stretch: Cys-24–Cys-146, Cys-48–Cys-134, Cys-83–Cys-99, and Cys-95–Cys-113. Catalysis depends on residues Glu-53 and Asp-71.

Belongs to the glycosyl hydrolase 22 family. In terms of assembly, monomer.

It localises to the secreted. The enzyme catalyses Hydrolysis of (1-&gt;4)-beta-linkages between N-acetylmuramic acid and N-acetyl-D-glucosamine residues in a peptidoglycan and between N-acetyl-D-glucosamine residues in chitodextrins.. In terms of biological role, lysozymes have primarily a bacteriolytic function; those in tissues and body fluids are associated with the monocyte-macrophage system and enhance the activity of immunoagents. Also plays a role in digestion in this species. The chain is Lysozyme C (LYZ) from Semnopithecus entellus (Northern plains gray langur).